A 237-amino-acid polypeptide reads, in one-letter code: Bax inhibitor 1 (237 aa).

The Cytoplasmic portion of the chain corresponds to methionine 1–lysine 29. A Glycyl lysine isopeptide (Lys-Gly) (interchain with G-Cter in ubiquitin) cross-link involves residue lysine 7. The chain crosses the membrane as a helical span at residues valine 30–valine 50. Residues threonine 51–arginine 52 are Lumenal-facing. Residues phenylalanine 53–alanine 73 traverse the membrane as a helical segment. At threonine 74–glycine 86 the chain is on the cytoplasmic side. The chain crosses the membrane as a helical span at residues leucine 87–isoleucine 107. Topologically, residues alanine 108–serine 112 are lumenal. Residues isoleucine 113–leucine 133 traverse the membrane as a helical segment. Over tyrosine 134–serine 139 the chain is Cytoplasmic. Residues tyrosine 140–glycine 160 traverse the membrane as a helical segment. Over asparagine 161–serine 166 the chain is Lumenal. Residues isoleucine 167–phenylalanine 187 form a helical membrane-spanning segment. The Cytoplasmic portion of the chain corresponds to aspartate 188–histidine 206. Positions cysteine 207–phenylalanine 227 form an intramembrane region, helical. Topologically, residues asparagine 228–lysine 237 are cytoplasmic.

Belongs to the BI1 family. Interacts with BCL2 and BCL2L1. Interacts with ERN1. Post-translationally, ubiquitinated by BFAR, leading to proteasomal degradation. As to expression, highly abundant in adult testis.

The protein localises to the endoplasmic reticulum membrane. Functionally, endoplasmic reticulum (ER)-resident protein that confers cellular protection as an anti-apoptotic protein by limiting multiple stress-inducing pathways surrounding the endoplasmic reticulum and mitochondria. Inhibits the activities of the key sensor for the endoplasmic reticulum unfolded protein response IRE1alpha/ERN1 both directly and by blocking BAX/BAK binding. Modulates ER calcium homeostasis by acting as a calcium-leak channel. Negatively regulates autophagy and autophagosome formation, especially during periods of nutrient deprivation, and reduces cell survival during starvation. This is Bax inhibitor 1 (Tmbim6) from Rattus norvegicus (Rat).